The sequence spans 120 residues: Large ribosomal subunit protein uL24 (120 aa).

The protein belongs to the universal ribosomal protein uL24 family. In terms of assembly, part of the 50S ribosomal subunit.

In terms of biological role, one of two assembly initiator proteins, it binds directly to the 5'-end of the 23S rRNA, where it nucleates assembly of the 50S subunit. Located at the polypeptide exit tunnel on the outside of the subunit. This is Large ribosomal subunit protein uL24 from Methanocaldococcus jannaschii (strain ATCC 43067 / DSM 2661 / JAL-1 / JCM 10045 / NBRC 100440) (Methanococcus jannaschii).